Consider the following 442-residue polypeptide: Radical S-adenosyl methionine domain-containing protein 1, mitochondrial (442 aa).

Residues 1–17 constitute a mitochondrion transit peptide; the sequence is MVPSGVRTGRWVAAARA. Residues 34–270 enclose the Radical SAM core domain; it reads ESASTRAALY…RTVLRDAGFR (237 aa). Tyrosine 43 contributes to the S-adenosyl-L-methionine binding site. [4Fe-4S] cluster contacts are provided by cysteine 49, cysteine 53, and cysteine 56. Residues glycine 98, 99–100, glutamate 131, glutamine 158, arginine 170, and aspartate 195 contribute to the S-adenosyl-L-methionine site; that span reads GT.

Belongs to the anaerobic coproporphyrinogen-III oxidase family. HemW subfamily. [4Fe-4S] cluster serves as cofactor.

Its subcellular location is the mitochondrion. In terms of biological role, may be a heme chaperone, appears to bind heme. Homologous bacterial proteins do not have oxygen-independent coproporphyrinogen-III oxidase activity. Binds 1 [4Fe-4S] cluster. The cluster is coordinated with 3 cysteines and an exchangeable S-adenosyl-L-methionine. The protein is Radical S-adenosyl methionine domain-containing protein 1, mitochondrial (Rsad1) of Mus musculus (Mouse).